The chain runs to 627 residues: Hemocyanin B chain (627 aa).

Positions 173, 177, and 204 each coordinate Cu cation. N-linked (GlcNAc...) asparagine glycosylation is found at Asn312 and Asn316. Cu cation is bound by residues His324, His328, and His364. Cys534 and Cys582 are oxidised to a cystine.

It belongs to the tyrosinase family. Hemocyanin subfamily. In terms of assembly, tarantula hemocyanin is a 24-chain polymer with seven different chains identified. As to expression, hemolymph.

The protein localises to the secreted. It localises to the extracellular space. Functionally, hemocyanins are copper-containing oxygen carriers occurring freely dissolved in the hemolymph of many mollusks and arthropods. This is Hemocyanin B chain (HCB) from Aphonopelma sp. (American tarantula).